Here is a 160-residue protein sequence, read N- to C-terminus: Calcium and integrin-binding family member 3 (160 aa).

EF-hand domains follow at residues 39–74 (KDNP…MSEM), 76–111 (PRDL…LTRG), and 117–152 (EVTL…APDF). Residues aspartate 89, asparagine 91, aspartate 93, tyrosine 95, aspartate 100, aspartate 130, aspartate 132, aspartate 134, arginine 136, and aspartate 141 each coordinate Ca(2+).

Monomer and homodimer. Interacts with ITGA2B (via C-terminus cytoplasmic tail region); the interaction is stabilized/increased in a calcium and magnesium-dependent manner. Interacts with TMC1. In terms of tissue distribution, expressed in heart, liver and inner ear. In the inner ear, expressed in vestibule and basilar membrane cells. Expressed in megakaryocytes and endothelial cells.

Its function is as follows. Acts as an auxiliary subunit of the sensory mechanoelectrical transduction (MET) channel in hair cells. Plays a role in regulating hair cell MET channel localization and function. This chain is Calcium and integrin-binding family member 3 (Cib3), found in Mus musculus (Mouse).